We begin with the raw amino-acid sequence, 466 residues long: tRNA-2-methylthio-N(6)-dimethylallyladenosine synthase (466 aa).

The 121-residue stretch at 5–125 (RKLHIKSYGC…LPELLARAGR (121 aa)) folds into the MTTase N-terminal domain. 6 residues coordinate [4Fe-4S] cluster: C14, C50, C88, C166, C170, and C173. The Radical SAM core domain maps to 152–384 (RARGVSAFVT…QSLIDSQQAA (233 aa)). Residues 387–449 (KAAIGTVVDV…RYSLLGELVA (63 aa)) enclose the TRAM domain.

Belongs to the methylthiotransferase family. MiaB subfamily. As to quaternary structure, monomer. Requires [4Fe-4S] cluster as cofactor.

The protein resides in the cytoplasm. The enzyme catalyses N(6)-dimethylallyladenosine(37) in tRNA + (sulfur carrier)-SH + AH2 + 2 S-adenosyl-L-methionine = 2-methylsulfanyl-N(6)-dimethylallyladenosine(37) in tRNA + (sulfur carrier)-H + 5'-deoxyadenosine + L-methionine + A + S-adenosyl-L-homocysteine + 2 H(+). In terms of biological role, catalyzes the methylthiolation of N6-(dimethylallyl)adenosine (i(6)A), leading to the formation of 2-methylthio-N6-(dimethylallyl)adenosine (ms(2)i(6)A) at position 37 in tRNAs that read codons beginning with uridine. This Bradyrhizobium sp. (strain BTAi1 / ATCC BAA-1182) protein is tRNA-2-methylthio-N(6)-dimethylallyladenosine synthase.